Here is a 306-residue protein sequence, read N- to C-terminus: Mating type protein SmtA-1 (306 aa).

The alpha box DNA-binding region spans 49–104 (APKKKVNGFMGFRSYYSPLFSQFPQKARSPFMTILWQHDPFHNEWDFMCSVYSSIR).

This sequence belongs to the MATALPHA1 family.

It localises to the nucleus. Functionally, mating type proteins are sequence specific DNA-binding proteins that act as master switches in fungal differentiation by controlling gene expression in a cell type-specific fashion. Transcriptional activator that induces the transcription of alpha-specific genes. The sequence is that of Mating type protein SmtA-1 (SMTA1) from Sordaria macrospora (strain ATCC MYA-333 / DSM 997 / K(L3346) / K-hell).